A 216-amino-acid polypeptide reads, in one-letter code: Chaperone protein TorD (216 aa).

Belongs to the TorD/DmsD family. TorD subfamily.

Its subcellular location is the cytoplasm. Functionally, involved in the biogenesis of TorA. Acts on TorA before the insertion of the molybdenum cofactor and, as a result, probably favors a conformation of the apoenzyme that is competent for acquiring the cofactor. The polypeptide is Chaperone protein TorD (Ferrimonas balearica (strain DSM 9799 / CCM 4581 / KCTC 23876 / PAT)).